A 114-amino-acid chain; its full sequence is Probable 4-amino-4-deoxy-L-arabinose-phosphoundecaprenol flippase subunit ArnE (114 aa).

A run of 3 helical transmembrane segments spans residues 38-58 (LTLRWLAIAVVSLGLGMLLWL), 64-84 (LPLSVAYPMLSFNFVLVTLAA), and 94-114 (LRHWLGVAAIMFGILLMSWHL). The EamA domain maps to 43–112 (LAIAVVSLGL…IMFGILLMSW (70 aa)).

This sequence belongs to the ArnE family. As to quaternary structure, heterodimer of ArnE and ArnF.

It is found in the cell inner membrane. It participates in bacterial outer membrane biogenesis; lipopolysaccharide biosynthesis. Its function is as follows. Translocates 4-amino-4-deoxy-L-arabinose-phosphoundecaprenol (alpha-L-Ara4N-phosphoundecaprenol) from the cytoplasmic to the periplasmic side of the inner membrane. In Yersinia pestis bv. Antiqua (strain Antiqua), this protein is Probable 4-amino-4-deoxy-L-arabinose-phosphoundecaprenol flippase subunit ArnE.